The following is a 563-amino-acid chain: Tripeptidyl-peptidase 1 (563 aa).

The signal sequence occupies residues 1-19 (MGPRSGLLGLFALFVAGKC). Positions 20-195 (SYSPEPDQQR…PEPQVPGTVG (176 aa)) are cleaved as a propeptide — removed in mature form. The cysteines at positions 111 and 122 are disulfide-linked. Residues 199–563 (GVTPSVIRKR…PALLKTLMNP (365 aa)) form the Peptidase S53 domain. Residues Asn-210 and Asn-222 are each glycosylated (N-linked (GlcNAc...) asparagine). Catalysis depends on charge relay system residues Glu-272 and Asp-276. N-linked (GlcNAc...) asparagine glycosylation is found at Asn-286, Asn-313, and Asn-443. Disulfide bonds link Cys-365–Cys-526 and Cys-522–Cys-537. Ser-475 serves as the catalytic Charge relay system. Residues Asp-517 and Val-518 each coordinate Ca(2+). Gly-539, Gly-541, and Asp-543 together coordinate Ca(2+).

In terms of assembly, monomer. Interacts with CLN5. Interacts with CLN3. It depends on Ca(2+) as a cofactor. Post-translationally, activated by autocatalytic proteolytical processing upon acidification. N-glycosylation is required for processing and activity.

The protein resides in the lysosome. The protein localises to the melanosome. It catalyses the reaction Release of an N-terminal tripeptide from a polypeptide, but also has endopeptidase activity.. Lysosomal serine protease with tripeptidyl-peptidase I activity. May act as a non-specific lysosomal peptidase which generates tripeptides from the breakdown products produced by lysosomal proteinases. Requires substrates with an unsubstituted N-terminus. In Bos taurus (Bovine), this protein is Tripeptidyl-peptidase 1 (TPP1).